Consider the following 592-residue polypeptide: Threonine--tRNA ligase (592 aa).

A catalytic region spans residues 193–488; the sequence is DHRKLGPALG…LIEHYGGAFP (296 aa). The Zn(2+) site is built by Cys-284, His-335, and His-465.

Belongs to the class-II aminoacyl-tRNA synthetase family. Homodimer. The cofactor is Zn(2+).

The protein resides in the cytoplasm. It carries out the reaction tRNA(Thr) + L-threonine + ATP = L-threonyl-tRNA(Thr) + AMP + diphosphate + H(+). Functionally, catalyzes the attachment of threonine to tRNA(Thr) in a two-step reaction: L-threonine is first activated by ATP to form Thr-AMP and then transferred to the acceptor end of tRNA(Thr). Also edits incorrectly charged L-seryl-tRNA(Thr). The polypeptide is Threonine--tRNA ligase (Treponema pallidum (strain Nichols)).